The chain runs to 277 residues: Nickel import ATP-binding protein NikE (277 aa).

In terms of domain architecture, ABC transporter spans 14 to 253 (YRTVSLVGRS…EHPASRALQR (240 aa)). Position 46-53 (46-53 (GRSGSGKS)) interacts with ATP.

Belongs to the ABC transporter superfamily. Nickel importer (TC 3.A.1.5.3) family. As to quaternary structure, the complex is composed of two ATP-binding proteins (NikD and NikE), two transmembrane proteins (NikB and NikC) and a solute-binding protein (NikA).

It is found in the cell inner membrane. The catalysed reaction is Ni(2+)(out) + ATP + H2O = Ni(2+)(in) + ADP + phosphate + H(+). Functionally, part of the ABC transporter complex NikABCDE involved in nickel import. Responsible for energy coupling to the transport system. The sequence is that of Nickel import ATP-binding protein NikE from Rhodospirillum rubrum (strain ATCC 11170 / ATH 1.1.1 / DSM 467 / LMG 4362 / NCIMB 8255 / S1).